Here is an 81-residue protein sequence, read N- to C-terminus: Protein PYP1 (81 aa).

Residues 1-25 (MAFVSGFTGMPVTARVSKAVCRTRM) constitute a chloroplast transit peptide. Positions 27-57 (LEGGKSSGGGEATRDPEPTAVDPNDPKGKQQ) are disordered.

Its subcellular location is the plastid. The protein localises to the chloroplast. In Pyropia yezoensis (Susabi-nori), this protein is Protein PYP1.